The following is a 244-amino-acid chain: Phosphoadenosine 5'-phosphosulfate reductase (244 aa).

Cys-239 functions as the Nucleophile; cysteine thiosulfonate intermediate in the catalytic mechanism.

The protein belongs to the PAPS reductase family. CysH subfamily.

It is found in the cytoplasm. It catalyses the reaction [thioredoxin]-disulfide + sulfite + adenosine 3',5'-bisphosphate + 2 H(+) = [thioredoxin]-dithiol + 3'-phosphoadenylyl sulfate. The protein operates within sulfur metabolism; hydrogen sulfide biosynthesis; sulfite from sulfate: step 3/3. Its function is as follows. Catalyzes the formation of sulfite from phosphoadenosine 5'-phosphosulfate (PAPS) using thioredoxin as an electron donor. In Cronobacter sakazakii (strain ATCC BAA-894) (Enterobacter sakazakii), this protein is Phosphoadenosine 5'-phosphosulfate reductase.